The primary structure comprises 804 residues: Ribonucleoside-diphosphate reductase large subunit (804 aa).

The ATP-cone domain maps to 1–92; that stretch reads MYVLNRKGEE…TDNLHKNTSD (92 aa). Residues 5–6, 11–17, threonine 53, and aspartate 57 contribute to the ATP site; these read NR and EDISFDQ. Residue serine 216 coordinates GDP. The cysteines at positions 217 and 442 are disulfide-linked. DTTP contacts are provided by residues 225–227, lysine 242, arginine 255, and 262–263; these read DSI and RG. Asparagine 425 is a binding site for GDP. Asparagine 425 acts as the Proton acceptor in catalysis. The active-site Cysteine radical intermediate is the cysteine 427. Residues glutamate 429 and 603-606 contribute to the GDP site; that span reads TAST. Residue glutamate 429 is the Proton acceptor of the active site.

This sequence belongs to the ribonucleoside diphosphate reductase large chain family. Heterodimer of a large and a small subunit.

It carries out the reaction a 2'-deoxyribonucleoside 5'-diphosphate + [thioredoxin]-disulfide + H2O = a ribonucleoside 5'-diphosphate + [thioredoxin]-dithiol. Its activity is regulated as follows. Under complex allosteric control mediated by deoxynucleoside triphosphates and ATP binding to separate specificity and activation sites on the large subunit. The type of nucleotide bound at the specificity site determines substrate preference. It seems probable that ATP makes the enzyme reduce CDP and UDP, dGTP favors ADP reduction and dTTP favors GDP reduction. Stimulated by ATP and inhibited by dATP binding to the activity site. In terms of biological role, provides the precursors necessary for DNA synthesis. Catalyzes the biosynthesis of deoxyribonucleotides from the corresponding ribonucleotides. The protein is Ribonucleoside-diphosphate reductase large subunit (RNR1) of Plasmodium falciparum (isolate FCR-3 / Gambia).